Reading from the N-terminus, the 154-residue chain is Large ribosomal subunit protein uL13 (154 aa).

It belongs to the universal ribosomal protein uL13 family. As to quaternary structure, part of the 50S ribosomal subunit.

Its function is as follows. This protein is one of the early assembly proteins of the 50S ribosomal subunit, although it is not seen to bind rRNA by itself. It is important during the early stages of 50S assembly. The polypeptide is Large ribosomal subunit protein uL13 (Allorhizobium ampelinum (strain ATCC BAA-846 / DSM 112012 / S4) (Agrobacterium vitis (strain S4))).